Consider the following 483-residue polypeptide: Regulatory protein ViaA (483 aa).

The protein belongs to the ViaA family. Homodimer. Interacts with RavA.

The protein resides in the cytoplasm. In terms of biological role, component of the RavA-ViaA chaperone complex, which may act on the membrane to optimize the function of some of the respiratory chains. ViaA stimulates the ATPase activity of RavA. This chain is Regulatory protein ViaA, found in Escherichia coli O6:K15:H31 (strain 536 / UPEC).